The sequence spans 123 residues: Large ribosomal subunit protein bL12 (123 aa).

The protein belongs to the bacterial ribosomal protein bL12 family. In terms of assembly, homodimer. Part of the ribosomal stalk of the 50S ribosomal subunit. Forms a multimeric L10(L12)X complex, where L10 forms an elongated spine to which 2 to 4 L12 dimers bind in a sequential fashion. Binds GTP-bound translation factors.

Forms part of the ribosomal stalk which helps the ribosome interact with GTP-bound translation factors. Is thus essential for accurate translation. The polypeptide is Large ribosomal subunit protein bL12 (Maricaulis maris (strain MCS10) (Caulobacter maris)).